We begin with the raw amino-acid sequence, 1676 residues long: Anucleate primary sterigmata protein A (1676 aa).

The span at 1 to 11 (MEDSQRGNASM) shows a compositional bias: polar residues. A disordered region spans residues 1–35 (MEDSQRGNASMMSMMDDPFVVSPEGARDPPSTNQY). A coiled-coil region spans residues 51–127 (AQAKRALEAH…EIGQETARAF (77 aa)). Disordered regions lie at residues 160–180 (QATNSPSKVSVPSRKSRNQSN), 353–394 (RLRQ…TPRH), 439–712 (DEVE…SRRP), 1027–1050 (GTSTDTVEFSVSSISSEETEPVEP), 1176–1201 (PLGAISGNAAPRRARSGSSNQADQGA), 1220–1270 (VRPL…QASS), and 1297–1354 (PASA…RRSS). Over residues 163 to 172 (NSPSKVSVPS) the composition is skewed to low complexity. Coiled coils occupy residues 193 to 359 (TSLL…QQEA) and 408 to 453 (HAHR…AANG). Basic and acidic residues-rich tracts occupy residues 355-370 (RQQEAESTREVVRPHD), 439-448 (DEVEQRRRDS), 461-470 (TKAETRKPAR), 479-489 (KKAEVEIHDSD), and 503-522 (ASNDSRDRRGDQPIDDRSDA). Positions 593–602 (SYYSTASTSA) are enriched in low complexity. Residues 609-620 (DPGTPSISQFST) show a composition bias toward polar residues. Residues 623–636 (YRLRKKRSVLRKIR) show a composition bias toward basic residues. Over residues 647–664 (SRPSSARESPSTSFTRDT) the composition is skewed to polar residues. A compositionally biased stretch (acidic residues) spans 678 to 687 (AEVDGDEDDF). A compositionally biased stretch (low complexity) spans 1032-1042 (TVEFSVSSISS). The segment covering 1191-1201 (SGSSNQADQGA) has biased composition (polar residues). Polar residues predominate over residues 1314 to 1341 (RASSQQRPRTPNESALQVGSAKTTTSRA). A PH domain is found at 1393-1504 (QTMIGEFLWK…WFNALSYLLV (112 aa)). The span at 1511-1524 (EEAENGVTLDDIDE) shows a compositional bias: acidic residues. Disordered stretches follow at residues 1511–1589 (EEAE…QASS) and 1654–1676 (HDVSSLSRTSRYSPRANRIHSHH). Composition is skewed to polar residues over residues 1534–1548 (RQTARMSVSSSQSRG) and 1580–1589 (YSDQARQASS).

Its subcellular location is the membrane. Functionally, required for nuclear positioning and completion of asexual development. This is Anucleate primary sterigmata protein A (apsA) from Emericella nidulans (strain FGSC A4 / ATCC 38163 / CBS 112.46 / NRRL 194 / M139) (Aspergillus nidulans).